Reading from the N-terminus, the 97-residue chain is Class II hydrophobin NC2 (97 aa).

The first 17 residues, 1 to 17 (MQFTIATVLSLLTITLA), serve as a signal peptide directing secretion. Cystine bridges form between C31-C79, C40-C70, C41-C53, and C80-C91. An N-linked (GlcNAc...) asparagine glycan is attached at N62.

Belongs to the cerato-ulmin hydrophobin family. In terms of assembly, homotrimer. Further self-assembles to form highly ordered films at water-air interfaces through intermolecular interactions.

It localises to the secreted. The protein localises to the cell wall. Functionally, aerial growth, conidiation, and dispersal of filamentous fungi in the environment rely upon a capability of their secreting small amphipathic proteins called hydrophobins (HPBs) with low sequence identity. Class I can self-assemble into an outermost layer of rodlet bundles on aerial cell surfaces, conferring cellular hydrophobicity that supports fungal growth, development and dispersal; whereas Class II form highly ordered films at water-air interfaces through intermolecular interactions but contribute nothing to the rodlet structure. NC2 is a class II hydrophobin that has the potential to adsorb to the hydrophobic interface at the hydrophobic-hydrophilic interface at very high rate but the predicted self-assembly NC2 film possesses a lower flexural rigidity than other class II hydrophobins such as HFBII from Hypocrea jecorina (also known as Trichoderma reesei). This Neurospora crassa (strain ATCC 24698 / 74-OR23-1A / CBS 708.71 / DSM 1257 / FGSC 987) protein is Class II hydrophobin NC2.